The chain runs to 846 residues: Selenocysteine insertion sequence-binding protein 2 (846 aa).

2 stretches are compositionally biased toward basic and acidic residues: residues 151–165 (RRAW…RRAD) and 206–215 (PEFEFSRLDF). 5 disordered regions span residues 151 to 246 (RRAW…SNMS), 266 to 288 (TDHT…TREL), 321 to 440 (TTSS…VPVQ), 448 to 467 (AALE…RPVV), and 475 to 613 (VLSK…DSAT). At Ser-220 the chain carries Phosphoserine. Polar residues-rich tracts occupy residues 220-232 (SPKN…TQKQ), 272-288 (AVTN…TREL), and 321-342 (TTSS…SDPS). Residues 370–380 (KKNKKKKEKSK) carry the Nuclear localization signal motif. A compositionally biased stretch (polar residues) spans 417–428 (KLQSKQQAQNDF). The segment covering 527–536 (ILKERQERMQ) has biased composition (basic and acidic residues). Residues 542–551 (SAVSPTVASD) are compositionally biased toward polar residues. An RNA-binding region spans residues 666-687 (LVLGLREVLKHLKLRKLKCIII). The segment at 774 to 804 (RQEQAGEPGPQTPPSPPMQDPIQSTDEGTLA) is disordered. The segment covering 783–792 (PQTPPSPPMQ) has biased composition (pro residues).

In terms of tissue distribution, ubiquitous.

It localises to the cytoplasm. The protein resides in the nucleus. MRNA-binding protein that binds to the SECIS (selenocysteine insertion sequence) element present in the 3'-UTR of mRNAs encoding selenoproteins and facilitates the incorporation of the rare amino acid selenocysteine. Insertion of selenocysteine at UGA codons is mediated by SECISBP2 and EEFSEC: SECISBP2 (1) specifically binds the SECIS sequence once the 80S ribosome encounters an in-frame UGA codon and (2) contacts the RPS27A/eS31 of the 40S ribosome before ribosome stalling. (3) GTP-bound EEFSEC then delivers selenocysteinyl-tRNA(Sec) to the 80S ribosome and adopts a preaccommodated state conformation. (4) After GTP hydrolysis, EEFSEC dissociates from the assembly, selenocysteinyl-tRNA(Sec) accommodates, and peptide bond synthesis and selenoprotein elongation occur. The polypeptide is Selenocysteine insertion sequence-binding protein 2 (Secisbp2) (Rattus norvegicus (Rat)).